The following is a 265-amino-acid chain: RNA-binding protein 7 (265 aa).

At G2 the chain carries N-acetylglycine. Positions 10-87 (RTLFVGNLET…RPIKIQFRSG (78 aa)) constitute an RRM domain. 2 ZCCHC8 binding regions span residues 25–35 (LLFELFHQAGP) and 59–76 (HEVS…IKLF). Residues 91–125 (ASQDASVSYPQHHVGNLSPTSTSPNSYERTVGNVS) are disordered. Polar residues predominate over residues 107-125 (LSPTSTSPNSYERTVGNVS). Phosphoserine; by MAPKAPK2 is present on S136. A Phosphoserine modification is found at S137. R152 is subject to Omega-N-methylarginine. 2 disordered regions span residues 166–224 (DQLG…HGSD) and 237–265 (DDRN…SSRH). Positions 170 to 196 (FSPSAQPHGHTFNQSSSSQWRQDALSS) are enriched in polar residues. A Phosphoserine modification is found at S203. Basic and acidic residues-rich tracts occupy residues 207-224 (LADR…HGSD) and 237-256 (DDRN…DSSR).

In terms of assembly, component of the nuclear exosome targeting (NEXT) complex composed of MTREX, ZCCHC8, and RBM7 that directs a subset of non-coding short-lived RNAs for exosomal degradation. Interacts with ZCCHC8 and SF3B2/SAP145. Binds to MTREX through ZCCHC8. Interacts with YWHAE and YWHAZ; these interactions are stress-dependent and RBM7 phosphorylation dependent; release RNA from the NEXT complex and may affect RNA targeting to the nuclear RNA exosomome for degradation. Interacts with MEPCE and LARP7, the core subunits of 7SK snRNP; upon genotoxic stress this interaction is enhanced, triggering the release of inactive P-TEFb complex from the core and P-TEFb complex activation. In terms of processing, phosphorylated at Ser-136 by MAPK14/p38-alpha-activated MAPKAPK2/MK2; this phosphorylation is stress-dependent; this phosphorylation decreases its RNA-binding capacity therefore affecting RNA nuclear exosome-mediated degradation. This phosphorylation mediates YWHAE and YWHAZ interactions.

The protein resides in the nucleus. Its subcellular location is the nucleoplasm. RNA-binding subunit of the trimeric nuclear exosome targeting (NEXT) complex, a complex that functions as an RNA exosome cofactor that directs a subset of non-coding short-lived RNAs for exosomal degradation. NEXT is involved in surveillance and turnover of aberrant transcripts and non-coding RNAs. Binds preferentially polyuridine sequences and associates with newly synthesized RNAs, including pre-mRNAs and short-lived exosome substrates such as promoter upstream transcripts (PROMPTs), enhancer RNAs (eRNAs), and 3'-extended products from small nuclear RNAs (snRNAs). Participates in several biological processes including DNA damage response (DDR) and stress response. During stress response, activation of the p38MAPK-MK2 pathway decreases RBM7-RNA-binding and subsequently the RNA exosome degradation activities, thereby modulating the turnover of non-coding transcriptome. Participates in DNA damage response (DDR), through its interaction with MEPCE and LARP7, the core subunits of 7SK snRNP complex, that release the positive transcription elongation factor b (P-TEFb) complex from the 7SK snRNP. In turn, activation of P-TEFb complex induces the transcription of P-TEFb-dependent DDR genes to promote cell viability. This chain is RNA-binding protein 7, found in Mus musculus (Mouse).